Reading from the N-terminus, the 359-residue chain is Phospho-N-acetylmuramoyl-pentapeptide-transferase (359 aa).

A run of 10 helical transmembrane segments spans residues 3–23 (QILI…PVLI), 55–75 (VAII…GVLM), 84–104 (GLLV…DDLI), 117–137 (TAKT…ALQF), 156–176 (IATV…VVSA), 190–210 (LAAG…FWQF), 231–251 (LAII…WNAA), 255–275 (IFMG…LSVT), 283–303 (VVLG…ILAF), and 330–350 (VIIR…ALFY).

The protein belongs to the glycosyltransferase 4 family. MraY subfamily. The cofactor is Mg(2+).

It is found in the cell membrane. It catalyses the reaction UDP-N-acetyl-alpha-D-muramoyl-L-alanyl-gamma-D-glutamyl-meso-2,6-diaminopimeloyl-D-alanyl-D-alanine + di-trans,octa-cis-undecaprenyl phosphate = di-trans,octa-cis-undecaprenyl diphospho-N-acetyl-alpha-D-muramoyl-L-alanyl-D-glutamyl-meso-2,6-diaminopimeloyl-D-alanyl-D-alanine + UMP. Its pathway is cell wall biogenesis; peptidoglycan biosynthesis. Functionally, catalyzes the initial step of the lipid cycle reactions in the biosynthesis of the cell wall peptidoglycan: transfers peptidoglycan precursor phospho-MurNAc-pentapeptide from UDP-MurNAc-pentapeptide onto the lipid carrier undecaprenyl phosphate, yielding undecaprenyl-pyrophosphoryl-MurNAc-pentapeptide, known as lipid I. The protein is Phospho-N-acetylmuramoyl-pentapeptide-transferase of Mycolicibacterium gilvum (strain PYR-GCK) (Mycobacterium gilvum (strain PYR-GCK)).